An 876-amino-acid chain; its full sequence is Pre-mRNA-splicing factor ATP-dependent RNA helicase-like protein PRP2 (876 aa).

The segment at 1-111 (MSSITSETGK…KGLLGDSENE (111 aa)) is disordered. Ser2 bears the N-acetylserine mark. Positions 61 to 70 (VFSNTNQGPE) are enriched in polar residues. The Helicase ATP-binding domain occupies 233–399 (LQEIKKNQVL…FDNCPIFNVP (167 aa)). ATP is bound at residue 246 to 253 (GETGSGKT). Residues 346 to 349 (DEAH) carry the DEAH box motif. Residues 424-598 (TIFQIHTTQS…NTVLLLLSLG (175 aa)) form the Helicase C-terminal domain.

This sequence belongs to the DEAD box helicase family. DEAH subfamily. Interacts directly with pre-mRNA. According to PubMed:2251118, associated with spliceosomes prior to and throughout step 1 of the splicing reaction. According to PubMed:8943336, it leaves the spliceosome before reaction 1. Interacts with SPP2.

The protein localises to the nucleus. It catalyses the reaction ATP + H2O = ADP + phosphate + H(+). Its function is as follows. Involved in pre-mRNA splicing. Is required together with ATP and at least one other factor, for the first cleavage-ligation reaction. Functions as a molecular motor in the activation of the precatalytic spliceosome for the first transesterification reaction of pre-mRNA splicing by hydrolyzing ATP to cause the activation of the spliceosome without the occurrence of splicing. Capable of hydrolyzing nucleoside triphosphates in the presence of single-stranded RNAs such as poly(U). This chain is Pre-mRNA-splicing factor ATP-dependent RNA helicase-like protein PRP2 (PRP2), found in Saccharomyces cerevisiae (strain ATCC 204508 / S288c) (Baker's yeast).